Here is a 690-residue protein sequence, read N- to C-terminus: Potassium-transporting ATPase ATP-binding subunit (690 aa).

Transmembrane regions (helical) follow at residues 49-69, 72-92, 229-249, and 253-273; these read SPVMLVVELTAVLTTLLCFVP, AVPTSVALQIALWLWFTVLFA, VALDILLIGLTLIFLLVVVTL, and ALFAGGNLPLVFLVALLVTLI. Residue Asp317 is the 4-aspartylphosphate intermediate of the active site. Residues Asp354, Glu358, 385–392, and Lys403 each bind ATP; that span reads FSAETRLS. Positions 526 and 530 each coordinate Mg(2+). 3 helical membrane passes run 596 to 616, 624 to 644, and 662 to 682; these read FAILPALFVGIYPQLDVLNVM, AILSAIVFNALIIVALIPLAL, and LLIYGVGGLVAPFLGIKAIDL.

This sequence belongs to the cation transport ATPase (P-type) (TC 3.A.3) family. Type IA subfamily. In terms of assembly, the system is composed of three essential subunits: KdpA, KdpB and KdpC.

The protein resides in the cell inner membrane. It catalyses the reaction K(+)(out) + ATP + H2O = K(+)(in) + ADP + phosphate + H(+). Its function is as follows. Part of the high-affinity ATP-driven potassium transport (or Kdp) system, which catalyzes the hydrolysis of ATP coupled with the electrogenic transport of potassium into the cytoplasm. This subunit is responsible for energy coupling to the transport system and for the release of the potassium ions to the cytoplasm. In Pseudomonas aeruginosa (strain ATCC 15692 / DSM 22644 / CIP 104116 / JCM 14847 / LMG 12228 / 1C / PRS 101 / PAO1), this protein is Potassium-transporting ATPase ATP-binding subunit.